The primary structure comprises 1379 residues: MAVEEKNSPTGAAMTNTGILVPSSQQSLPEWWTKTQKFFSRENTITPTFGYFRLLFGTQPGKTDIALIVIGTIAGIGAGIPFPLLGILFGELVDDLNSSTCSTTQAPPGGYQAAITTKVLQVIYVSILNFVCMYIHTGCWSMVGERLVRRLRTKYFHSLLRQEIAFTDTLPSGDVTSRLVSDIEVIQAGTSEKVGLFIGTISYFVAAYIVAFLKVATIAAMLMSVVPIYFLMAFGGGHYIKKYSGRISTHINAATSIVSSSLSHMSIVHAFNANARLEALFAQHLVSARMDALKKAITHSIQFGMLYFVAYASNALAFWQGSRMIADLAEGKPSKVSVGAVYTVIFVLLDASFVLSQMAPFMHIFASAASAGDRLMTTIKRQSAIDGTSSEGDSTISLASEEIELQDVTFNYPARPEVPVLQGVSFKIPPNKHTAIVGTSGSGKSTVVALLERLYDPITGCVRVGNRDLKEINVRHLRGSIGLVQQEPNLLDRSILENIAHGLVSSSQEKHKHLLPTLLGPSLSELTEKIRQGASEDEAVTEQGDVVREIVNLTRHAATLSNAIDFINALPDGLATRVGSSGAELSGGQKQRIALARALIRDPPVLLLDEATAALDSTSERLIQAALNKVSENVTTVSIAHRLATAKDADNIIVMQKGRVMEQGTHMDLVARDGVYAGMVRLQNIGKFSSSSSIMTESTQVDANIDRSLTTDTLLNKEEKLSLEQGVLDEKEKPAQLYMPEEADSLPTEPENEKEKPKQTLWATMKGSFPLIRPNILLISLGLITSIMIGVSYTGEAVIFGHTVGSLSVCRGGPSIRSSGMLFGLLFFILAIVKFAAVIVNGAAFGWAAEKTLYRTRVLSLRSLLRQPLEWHNADGRTPGLLVALVTSDASALSSLTGTTIGVLFSTVANLFAGVILSHVIAWRIAVVLLATLPVLLASGVLRLRVMAQYQKKHQKAYAKATAITVESVDNIKSIAAFSLEQEAYSVFNRSLKAPYKSNMKSVLHGNFWLSLAYSISTLVYALAYWWGSQQILAGMYTQVQFFIVLPALLFSTQSCGQMFALVPDISKARIAASNIVDLLSIKHEGDEEYDKTGSKASAKHTDPRFNMLEDKPRDVEAQLITTTPPSFPTKGMGVQFRNVHFRYPSRPNQPALDDLSINISPGQFCALVGPSGSGKSTTFALLEKFYNPASGSIIIDGVDITKQSGAAFRDTIALVPQENVMFEGTVAFNIGLGARPDVEATQEEIEEACRLANIHDTIAALPDGYNTVCSQDGKQFSGGQRQRLSIARALVRKPRLLLLDESTSALDVESEKHVQDALAKVARKTTIVAIAHRLNTIHRADRIFMIEGGRCVDQGTHAELVERCESYRANVIHQSLDA.

Residues 65–85 (IALIVIGTIAGIGAGIPFPLL) form a helical membrane-spanning segment. The ABC transmembrane type-1 1 domain maps to 69–367 (VIGTIAGIGA…MAPFMHIFAS (299 aa)). An N-linked (GlcNAc...) asparagine glycan is attached at N97. The next 5 membrane-spanning stretches (helical) occupy residues 119–139 (VLQV…HTGC), 193–213 (KVGL…VAFL), 215–235 (VATI…MAFG), 301–321 (IQFG…FWQG), and 336–356 (VSVG…FVLS). The ABC transporter 1 domain maps to 403–682 (IELQDVTFNY…DGVYAGMVRL (280 aa)). 438-445 (GTSGSGKS) is a binding site for ATP. N-linked (GlcNAc...) asparagine glycosylation is found at N552 and N633. The tract at residues 738–758 (YMPEEADSLPTEPENEKEKPK) is disordered. Helical transmembrane passes span 781–801 (LGLI…VIFG), 820–840 (GMLF…AVIV), 901–921 (IGVL…SHVI), and 922–942 (AWRI…SGVL). One can recognise an ABC transmembrane type-1 2 domain in the interval 781–1068 (LGLITSIMIG…MFALVPDISK (288 aa)). N989 is a glycosylation site (N-linked (GlcNAc...) asparagine). 2 helical membrane passes run 1008–1028 (FWLS…YWWG) and 1032–1052 (ILAG…LLFS). The 240-residue stretch at 1135–1374 (VQFRNVHFRY…CESYRANVIH (240 aa)) folds into the ABC transporter 2 domain. 1170-1177 (GPSGSGKS) contributes to the ATP binding site.

Belongs to the ABC transporter superfamily. ABCB family. Multidrug resistance exporter (TC 3.A.1.201) subfamily.

The protein localises to the cell membrane. Functionally, pleiotropic ABC efflux transporter that may be involved in the modulation susceptibility to a wide range of unrelated cytotoxic compounds. This chain is ABC multidrug transporter MDR2, found in Trichophyton equinum (strain ATCC MYA-4606 / CBS 127.97) (Horse ringworm fungus).